A 150-amino-acid chain; its full sequence is Large ribosomal subunit protein bL9 (150 aa).

It belongs to the bacterial ribosomal protein bL9 family.

Its function is as follows. Binds to the 23S rRNA. The sequence is that of Large ribosomal subunit protein bL9 from Shewanella loihica (strain ATCC BAA-1088 / PV-4).